Reading from the N-terminus, the 158-residue chain is Phosphopantetheine adenylyltransferase (158 aa).

T9 serves as a coordination point for substrate. Residues 9–10 and H17 each bind ATP; that span reads TF. Residues K41, L73, and R87 each coordinate substrate. Residues 88–90, E98, and 123–129 each bind ATP; these read GVR and WSYVSST.

This sequence belongs to the bacterial CoaD family. As to quaternary structure, homohexamer. It depends on Mg(2+) as a cofactor.

Its subcellular location is the cytoplasm. The enzyme catalyses (R)-4'-phosphopantetheine + ATP + H(+) = 3'-dephospho-CoA + diphosphate. The protein operates within cofactor biosynthesis; coenzyme A biosynthesis; CoA from (R)-pantothenate: step 4/5. Reversibly transfers an adenylyl group from ATP to 4'-phosphopantetheine, yielding dephospho-CoA (dPCoA) and pyrophosphate. The polypeptide is Phosphopantetheine adenylyltransferase (Histophilus somni (strain 129Pt) (Haemophilus somnus)).